Here is a 393-residue protein sequence, read N- to C-terminus: Phosphoglycerate kinase (393 aa).

Substrate-binding positions include 21–23 (DLN), Arg-36, 59–62 (HLGR), Arg-114, and Arg-147. ATP is bound by residues Lys-198, Glu-320, and 346-349 (GGDT).

The protein belongs to the phosphoglycerate kinase family. As to quaternary structure, monomer.

It localises to the cytoplasm. It carries out the reaction (2R)-3-phosphoglycerate + ATP = (2R)-3-phospho-glyceroyl phosphate + ADP. It participates in carbohydrate degradation; glycolysis; pyruvate from D-glyceraldehyde 3-phosphate: step 2/5. The protein is Phosphoglycerate kinase of Methylobacillus flagellatus (strain ATCC 51484 / DSM 6875 / VKM B-1610 / KT).